Consider the following 271-residue polypeptide: Tryptophan synthase alpha chain (271 aa).

Active-site proton acceptor residues include glutamate 49 and aspartate 60.

Belongs to the TrpA family. Tetramer of two alpha and two beta chains.

It catalyses the reaction (1S,2R)-1-C-(indol-3-yl)glycerol 3-phosphate + L-serine = D-glyceraldehyde 3-phosphate + L-tryptophan + H2O. It participates in amino-acid biosynthesis; L-tryptophan biosynthesis; L-tryptophan from chorismate: step 5/5. Its function is as follows. The alpha subunit is responsible for the aldol cleavage of indoleglycerol phosphate to indole and glyceraldehyde 3-phosphate. In Yersinia pestis bv. Antiqua (strain Angola), this protein is Tryptophan synthase alpha chain.